The chain runs to 257 residues: NH(3)-dependent NAD(+) synthetase (257 aa).

40–47 (GISGGIDS) is an ATP binding site. A Mg(2+)-binding site is contributed by Asp-46. Position 121 (Arg-121) interacts with deamido-NAD(+). Thr-141 lines the ATP pocket. Glu-146 serves as a coordination point for Mg(2+). Deamido-NAD(+) contacts are provided by Lys-154 and Asp-161. ATP-binding residues include Lys-170 and Ser-192. Residue 238 to 239 (HK) coordinates deamido-NAD(+).

The protein belongs to the NAD synthetase family. As to quaternary structure, homodimer.

It carries out the reaction deamido-NAD(+) + NH4(+) + ATP = AMP + diphosphate + NAD(+) + H(+). Its pathway is cofactor biosynthesis; NAD(+) biosynthesis; NAD(+) from deamido-NAD(+) (ammonia route): step 1/1. In terms of biological role, catalyzes the ATP-dependent amidation of deamido-NAD to form NAD. Uses ammonia as a nitrogen source. The protein is NH(3)-dependent NAD(+) synthetase of Mycoplasmopsis pulmonis (strain UAB CTIP) (Mycoplasma pulmonis).